A 312-amino-acid polypeptide reads, in one-letter code: Zinc finger protein 414 (312 aa).

The segment at 1 to 110 (MEEKPSGPIP…RRPPPGKQIP (110 aa)) is disordered. Low complexity predominate over residues 29-48 (SPAVPAAAPSSSMSEEPGPE). Positions 84 to 93 (GLTSIVSGTS) are enriched in polar residues. C2H2-type zinc fingers lie at residues 109–133 (IPCS…LRTH), 145–169 (FRCS…SKLH), and 176–201 (FKCE…CAEH). Positions 203–312 (QSPAPPPPPA…GSDAPSGACR (110 aa)) are disordered. Residues 213–225 (LDREPPAPERPPE) show a composition bias toward basic and acidic residues. Low complexity-rich tracts occupy residues 227-243 (DPAS…EPFT) and 265-285 (SPPR…SSAA).

Belongs to the krueppel C2H2-type zinc-finger protein family.

The protein resides in the nucleus. Functionally, may be involved in transcriptional regulation. In Homo sapiens (Human), this protein is Zinc finger protein 414 (ZNF414).